We begin with the raw amino-acid sequence, 89 residues long: Large ribosomal subunit protein bL27 (89 aa).

Positions 1 to 21 (MAHKKAGGSSRNGRDSQSKRL) are disordered.

The protein belongs to the bacterial ribosomal protein bL27 family.

The protein is Large ribosomal subunit protein bL27 of Rhizobium rhizogenes (strain K84 / ATCC BAA-868) (Agrobacterium radiobacter).